We begin with the raw amino-acid sequence, 262 residues long: Tritrans,polycis-undecaprenyl-diphosphate synthase (GGDP specific) (262 aa).

D40 is an active-site residue. A Mg(2+)-binding site is contributed by D40. Residues 41–44 (GNRR), W45, and 85–87 (SAE) each bind substrate. Residue N88 is the Proton acceptor of the active site. Substrate-binding positions include R92, R211, and 217-219 (RIS). E230 contacts Mg(2+).

It belongs to the UPP synthase family. Homodimer. Mg(2+) serves as cofactor.

The enzyme catalyses geranylgeranyl diphosphate + 7 isopentenyl diphosphate = tri-trans,hepta-cis-undecaprenyl diphosphate + 7 diphosphate. Generates tritrans,heptacis-undecaprenyl diphosphate from isopentenyl pyrophosphate (IPP) and geranylgeranyl diphosphate. It is probably the precursor of glycosyl carrier lipids. The sequence is that of Tritrans,polycis-undecaprenyl-diphosphate synthase (GGDP specific) (uppS) from Sulfolobus acidocaldarius (strain ATCC 33909 / DSM 639 / JCM 8929 / NBRC 15157 / NCIMB 11770).